A 258-amino-acid polypeptide reads, in one-letter code: Thiazole synthase (258 aa).

Catalysis depends on Lys-100, which acts as the Schiff-base intermediate with DXP. 1-deoxy-D-xylulose 5-phosphate contacts are provided by residues Gly-161, 187–188, and 209–210; these read AG and NT.

The protein belongs to the ThiG family. As to quaternary structure, homotetramer. Forms heterodimers with either ThiH or ThiS.

The protein localises to the cytoplasm. The catalysed reaction is [ThiS sulfur-carrier protein]-C-terminal-Gly-aminoethanethioate + 2-iminoacetate + 1-deoxy-D-xylulose 5-phosphate = [ThiS sulfur-carrier protein]-C-terminal Gly-Gly + 2-[(2R,5Z)-2-carboxy-4-methylthiazol-5(2H)-ylidene]ethyl phosphate + 2 H2O + H(+). It functions in the pathway cofactor biosynthesis; thiamine diphosphate biosynthesis. Functionally, catalyzes the rearrangement of 1-deoxy-D-xylulose 5-phosphate (DXP) to produce the thiazole phosphate moiety of thiamine. Sulfur is provided by the thiocarboxylate moiety of the carrier protein ThiS. In vitro, sulfur can be provided by H(2)S. This chain is Thiazole synthase, found in Campylobacter jejuni subsp. jejuni serotype O:2 (strain ATCC 700819 / NCTC 11168).